A 299-amino-acid chain; its full sequence is Bifunctional protein FolD (299 aa).

NADP(+)-binding positions include 164 to 166 and Ile234; that span reads GRS.

The protein belongs to the tetrahydrofolate dehydrogenase/cyclohydrolase family. Homodimer.

The enzyme catalyses (6R)-5,10-methylene-5,6,7,8-tetrahydrofolate + NADP(+) = (6R)-5,10-methenyltetrahydrofolate + NADPH. It carries out the reaction (6R)-5,10-methenyltetrahydrofolate + H2O = (6R)-10-formyltetrahydrofolate + H(+). The protein operates within one-carbon metabolism; tetrahydrofolate interconversion. Functionally, catalyzes the oxidation of 5,10-methylenetetrahydrofolate to 5,10-methenyltetrahydrofolate and then the hydrolysis of 5,10-methenyltetrahydrofolate to 10-formyltetrahydrofolate. This is Bifunctional protein FolD from Christiangramia forsetii (strain DSM 17595 / CGMCC 1.15422 / KT0803) (Gramella forsetii).